Consider the following 133-residue polypeptide: Histone H2A (133 aa).

The span at 1 to 10 shows a compositional bias: gly residues; the sequence is MTGGKSGGKA. Residues 1-24 are disordered; the sequence is MTGGKSGGKASGSKNAQSRSSKAG. N6-acetyllysine occurs at positions 5 and 9. Position 106 is an N5-methylglutamine (Gln106). Ser130 carries the post-translational modification Phosphoserine. The [ST]-Q motif signature appears at 130–131; the sequence is SQ.

It belongs to the histone H2A family. The nucleosome is a histone octamer containing two molecules each of H2A, H2B, H3 and H4 assembled in one H3-H4 heterotetramer and two H2A-H2B heterodimers. The octamer wraps approximately 147 bp of DNA. In terms of processing, phosphorylated to form H2AS128ph (gamma-H2A) in response to DNA double-strand breaks (DSBs) generated by exogenous genotoxic agents and by stalled replication forks. Phosphorylation is dependent on the DNA damage checkpoint kinases mec1/ATR and tel1/ATM, spreads on either side of a detected DSB site and may mark the surrounding chromatin for recruitment of proteins required for DNA damage signaling and repair. Gamma-H2A is removed from the DNA prior to the strand invasion-primer extension step of the repair process and subsequently dephosphorylated. Dephosphorylation is necessary for efficient recovery from the DNA damage checkpoint. Acetylated by esa1 to form H2AK4ac and H2AK7ac.

It is found in the nucleus. Its subcellular location is the chromosome. Its function is as follows. Core component of nucleosome which plays a central role in DNA double strand break (DSB) repair. Nucleosomes wrap and compact DNA into chromatin, limiting DNA accessibility to the cellular machineries which require DNA as a template. Histones thereby play a central role in transcription regulation, DNA repair, DNA replication and chromosomal stability. DNA accessibility is regulated via a complex set of post-translational modifications of histones, also called histone code, and nucleosome remodeling. The protein is Histone H2A (hta1) of Aspergillus clavatus (strain ATCC 1007 / CBS 513.65 / DSM 816 / NCTC 3887 / NRRL 1 / QM 1276 / 107).